We begin with the raw amino-acid sequence, 418 residues long: Glutamyl-tRNA(Gln) amidotransferase subunit D (418 aa).

One can recognise an Asparaginase/glutaminase domain in the interval 74-405 (KNISILSTGG…KEAKELMSKN (332 aa)). Active-site residues include T84, T160, D161, and K237.

It belongs to the asparaginase 1 family. GatD subfamily. As to quaternary structure, heterodimer of GatD and GatE.

The enzyme catalyses L-glutamyl-tRNA(Gln) + L-glutamine + ATP + H2O = L-glutaminyl-tRNA(Gln) + L-glutamate + ADP + phosphate + H(+). Its function is as follows. Allows the formation of correctly charged Gln-tRNA(Gln) through the transamidation of misacylated Glu-tRNA(Gln) in organisms which lack glutaminyl-tRNA synthetase. The reaction takes place in the presence of glutamine and ATP through an activated gamma-phospho-Glu-tRNA(Gln). The GatDE system is specific for glutamate and does not act on aspartate. This chain is Glutamyl-tRNA(Gln) amidotransferase subunit D, found in Methanococcus maripaludis (strain DSM 14266 / JCM 13030 / NBRC 101832 / S2 / LL).